Reading from the N-terminus, the 384-residue chain is Deoxyguanosinetriphosphate triphosphohydrolase-like protein (384 aa).

An HD domain is found at 62-198 (RLTHSLEVST…AALADDISYI (137 aa)).

This sequence belongs to the dGTPase family. Type 2 subfamily.

The protein is Deoxyguanosinetriphosphate triphosphohydrolase-like protein of Rickettsia peacockii (strain Rustic).